The sequence spans 329 residues: Protein RecA (329 aa).

63 to 70 (GNESSGKT) provides a ligand contact to ATP.

Belongs to the RecA family.

The protein resides in the cytoplasm. Functionally, can catalyze the hydrolysis of ATP in the presence of single-stranded DNA, the ATP-dependent uptake of single-stranded DNA by duplex DNA, and the ATP-dependent hybridization of homologous single-stranded DNAs. It interacts with LexA causing its activation and leading to its autocatalytic cleavage. The chain is Protein RecA from Malacoplasma penetrans (strain HF-2) (Mycoplasma penetrans).